A 408-amino-acid chain; its full sequence is Acetate kinase (408 aa).

Residue Asn-7 participates in Mg(2+) binding. An ATP-binding site is contributed by Lys-14. Residue Arg-91 coordinates substrate. Asp-148 (proton donor/acceptor) is an active-site residue. ATP contacts are provided by residues 208–212 (HLGNG), 283–285 (DFR), and 331–335 (GIGEN). Residue Glu-384 participates in Mg(2+) binding.

This sequence belongs to the acetokinase family. Homodimer. The cofactor is Mg(2+). It depends on Mn(2+) as a cofactor.

The protein resides in the cytoplasm. It carries out the reaction acetate + ATP = acetyl phosphate + ADP. It participates in metabolic intermediate biosynthesis; acetyl-CoA biosynthesis; acetyl-CoA from acetate: step 1/2. With respect to regulation, inhibited by diethylpyrocarbonate, hydroxylamine and phenylglyoxal. Catalyzes the formation of acetyl phosphate from acetate and ATP. Can also catalyze the reverse reaction. Can also phosphorylate propionate, but has very low activity toward butyrate. The chain is Acetate kinase from Methanosarcina thermophila.